The sequence spans 280 residues: Polyamine aminopropyltransferase 1 (280 aa).

A PABS domain is found at 3-237 (DIVFIERDPY…YWWTFSIASK (235 aa)). Gln-33 contributes to the S-methyl-5'-thioadenosine binding site. Residues His-64 and Asp-88 each contribute to the spermidine site. S-methyl-5'-thioadenosine is bound by residues Asp-108 and 139-140 (DG). The active-site Proton acceptor is Asp-157. Spermidine is bound at residue 157 to 160 (DSTD).

It belongs to the spermidine/spermine synthase family. Homodimer or homotetramer.

It localises to the cytoplasm. It catalyses the reaction S-adenosyl 3-(methylsulfanyl)propylamine + putrescine = S-methyl-5'-thioadenosine + spermidine + H(+). It functions in the pathway amine and polyamine biosynthesis; spermidine biosynthesis; spermidine from putrescine: step 1/1. Functionally, catalyzes the irreversible transfer of a propylamine group from the amino donor S-adenosylmethioninamine (decarboxy-AdoMet) to putrescine (1,4-diaminobutane) to yield spermidine. The sequence is that of Polyamine aminopropyltransferase 1 from Aquifex aeolicus (strain VF5).